We begin with the raw amino-acid sequence, 475 residues long: 3-hydroxyadipyl-CoA dehydrogenase (475 aa).

The protein belongs to the 3-hydroxyacyl-CoA dehydrogenase family. As to quaternary structure, homotrimer.

It catalyses the reaction (3S)-3-hydroxyadipyl-CoA + NAD(+) = 3-oxoadipyl-CoA + NADH + H(+). Its pathway is aromatic compound metabolism; phenylacetate degradation. Its function is as follows. Catalyzes the oxidation of 3-hydroxyadipyl-CoA to yield 3-oxoadipyl-CoA. The chain is 3-hydroxyadipyl-CoA dehydrogenase (paaH) from Escherichia coli (strain K12).